Consider the following 324-residue polypeptide: Olfactory receptor 11H4 (324 aa).

Over 1-35 the chain is Extracellular; sequence MSFFFVDLRPMNRSATHIVTEFILLGFPGCWKIQI. N-linked (GlcNAc...) asparagine glycosylation occurs at N12. The helical transmembrane segment at 36–56 threads the bilayer; the sequence is FLFSLFLVIYVLTLLGNGAII. The Cytoplasmic segment spans residues 57 to 64; sequence YAVRCNPL. Residues 65-85 form a helical membrane-spanning segment; the sequence is LHTPMYFLLGNFAFLEIWYVS. The Extracellular segment spans residues 86–109; it reads STIPNMLVNILSKTKAISFSGCFL. The cysteines at positions 107 and 199 are disulfide-linked. A helical membrane pass occupies residues 110–130; it reads QFYFFFSLGTTECLFLAVMAY. Residues 131–149 lie on the Cytoplasmic side of the membrane; that stretch reads DRYLAICHPLQYPAIMTVR. A helical transmembrane segment spans residues 150 to 170; sequence FCGKLVSFCWLIGFLGYPIPI. At 171–207 the chain is on the extracellular side; that stretch reads FYISQLPFCGPNIIDHFLCDMDPLMALSCAPAPITEC. A helical transmembrane segment spans residues 208-227; the sequence is IFYTQSSLVLFFTSMYILRS. The Cytoplasmic portion of the chain corresponds to 228–247; it reads YILLLTAVFQVPSAAGRRKA. A helical membrane pass occupies residues 248 to 268; the sequence is FSTCGSHLVVVSLFYGTVMVM. The Extracellular portion of the chain corresponds to 269–281; sequence YVSPTYGIPTLLQ. A helical transmembrane segment spans residues 282 to 302; it reads KILTLVYSVTTPLFNPLIYTL. Residues 303-324 lie on the Cytoplasmic side of the membrane; that stretch reads RNKDMKLALRNVLFGMRIRQNS.

This sequence belongs to the G-protein coupled receptor 1 family.

It localises to the cell membrane. Functionally, odorant receptor. This is Olfactory receptor 11H4 (OR11H4) from Homo sapiens (Human).